Here is a 274-residue protein sequence, read N- to C-terminus: Large ribosomal subunit protein uL2 (274 aa).

Residues 224–256 are disordered; sequence AMNPIDHPHGGGEGRTGEGRHAVDPWGNLTKGY. A compositionally biased stretch (basic and acidic residues) spans 229 to 246; it reads DHPHGGGEGRTGEGRHAV.

It belongs to the universal ribosomal protein uL2 family. In terms of assembly, part of the 50S ribosomal subunit. Forms a bridge to the 30S subunit in the 70S ribosome.

One of the primary rRNA binding proteins. Required for association of the 30S and 50S subunits to form the 70S ribosome, for tRNA binding and peptide bond formation. It has been suggested to have peptidyltransferase activity; this is somewhat controversial. Makes several contacts with the 16S rRNA in the 70S ribosome. The protein is Large ribosomal subunit protein uL2 of Acidovorax ebreus (strain TPSY) (Diaphorobacter sp. (strain TPSY)).